Consider the following 359-residue polypeptide: MNIRKKTRKIYIGNIAIGGDAPIIVQSMTNTDTRDIEATLKQINQLHAVGCEIVRLAVPDANAAKALKAIHDASPLPLIADIHFDYRLALTALESGIEGLRINPGNIGERKKVVTVVDAAKAHKASIRIGVNSGSVEKHLIDKFGGPVPEAMVESALNHIKILEDEKFYEIKVSIKSSSVLDTIAAYRMLSKSCDYPLHLGVTEAGSLIRGTVKSSVGLGILLSEGIGDTLRISLTEDPVEEVPVAWEILRALGLRRRGPEIIACPSCGRAEIDLIRLTKDVEACLVNEKTPLKIAVMGCVVNGPGEAKEADIGIAGGRDKGIIFAKGKVIRSVHGQDKLLNVFMEEVNKVIAEYNTTQ.

[4Fe-4S] cluster is bound by residues Cys-265, Cys-268, Cys-300, and Glu-307.

Belongs to the IspG family. It depends on [4Fe-4S] cluster as a cofactor.

The catalysed reaction is (2E)-4-hydroxy-3-methylbut-2-enyl diphosphate + oxidized [flavodoxin] + H2O + 2 H(+) = 2-C-methyl-D-erythritol 2,4-cyclic diphosphate + reduced [flavodoxin]. It functions in the pathway isoprenoid biosynthesis; isopentenyl diphosphate biosynthesis via DXP pathway; isopentenyl diphosphate from 1-deoxy-D-xylulose 5-phosphate: step 5/6. In terms of biological role, converts 2C-methyl-D-erythritol 2,4-cyclodiphosphate (ME-2,4cPP) into 1-hydroxy-2-methyl-2-(E)-butenyl 4-diphosphate. This is 4-hydroxy-3-methylbut-2-en-1-yl diphosphate synthase (flavodoxin) from Lawsonia intracellularis (strain PHE/MN1-00).